The following is a 383-amino-acid chain: Histidine decarboxylase (383 aa).

His120 contacts substrate. Residue Lys233 is modified to N6-(pyridoxal phosphate)lysine.

It belongs to the group II decarboxylase family. Homotetramer. The cofactor is pyridoxal 5'-phosphate.

The enzyme catalyses L-histidine + H(+) = histamine + CO2. The polypeptide is Histidine decarboxylase (Acinetobacter baumannii (strain ATCC 17978 / DSM 105126 / CIP 53.77 / LMG 1025 / NCDC KC755 / 5377)).